Here is a 394-residue protein sequence, read N- to C-terminus: Elongation factor Tu (394 aa).

The region spanning 10-204 (KPHVNVGTIG…ALDSYIPEPE (195 aa)) is the tr-type G domain. Residues 19-26 (GHVDHGKT) are G1. 19–26 (GHVDHGKT) serves as a coordination point for GTP. Mg(2+) is bound at residue T26. The tract at residues 60–64 (GITIS) is G2. Residues 81–84 (DCPG) are G3. Residues 81 to 85 (DCPGH) and 136 to 139 (NKCD) each bind GTP. Residues 136-139 (NKCD) form a G4 region. The tract at residues 174–176 (SAL) is G5.

This sequence belongs to the TRAFAC class translation factor GTPase superfamily. Classic translation factor GTPase family. EF-Tu/EF-1A subfamily. In terms of assembly, monomer.

The protein resides in the cytoplasm. It catalyses the reaction GTP + H2O = GDP + phosphate + H(+). GTP hydrolase that promotes the GTP-dependent binding of aminoacyl-tRNA to the A-site of ribosomes during protein biosynthesis. The protein is Elongation factor Tu of Pseudoalteromonas atlantica (strain T6c / ATCC BAA-1087).